Reading from the N-terminus, the 146-residue chain is MORN repeat-containing protein 4 (146 aa).

4 MORN repeats span residues 16 to 38 (YRGE…DGGT), 39 to 61 (YLGH…DGSR), 62 to 84 (YEGE…DNMT), and 85 to 107 (FEGE…DGSH).

In terms of assembly, interacts with MYO3A.

It is found in the cytoplasm. Its subcellular location is the cell projection. The protein localises to the filopodium tip. The protein resides in the stereocilium. Plays a role in promoting axonal degeneration following neuronal injury by toxic insult or trauma. This Homo sapiens (Human) protein is MORN repeat-containing protein 4 (MORN4).